Reading from the N-terminus, the 429-residue chain is MEIIYEEFKEALSKIKVLRENANIIEETVQRSVREIIRHVREGKDEALSFYTKKFDGVEMKNFRVSEEEIQQASMFVENSFLEALKEAKKNVVSYHEKQKKHSIFDCESKGIIRGQLIRPLENIGVYVPGGTASYPSSVLMNVLPAKLAGVKKIVMVTPPRKGGIDPHILAAADLAGVDEIYTIGGAQAIAALAYGTESIPKVDKIVGPGNLYVALAKREVYGIVNIDMIAGPSEIVVVADETGNAKYIAADLLSQAEHDERATAICITTNMELAKEVEKEVERQLETLPRSEIARESINRNGAIFIVPSLEEALKLSNEIAPEHLELHIKEPMNALDYVKHAGSIFLGPYSPEPLGDYLAGPNHVLPTSGTARFFSPLSVDDFVKKSSFISYTEEALKNVQHHIVELANKEGLHAHARAIQIRFEEEK.

Y127, Q188, and N211 together coordinate NAD(+). Positions 234, 256, and 259 each coordinate substrate. 2 residues coordinate Zn(2+): Q256 and H259. Catalysis depends on proton acceptor residues E324 and H325. Substrate contacts are provided by H325, D358, E412, and H417. D358 contacts Zn(2+). Residue H417 participates in Zn(2+) binding.

Belongs to the histidinol dehydrogenase family. Zn(2+) is required as a cofactor.

The catalysed reaction is L-histidinol + 2 NAD(+) + H2O = L-histidine + 2 NADH + 3 H(+). It participates in amino-acid biosynthesis; L-histidine biosynthesis; L-histidine from 5-phospho-alpha-D-ribose 1-diphosphate: step 9/9. Functionally, catalyzes the sequential NAD-dependent oxidations of L-histidinol to L-histidinaldehyde and then to L-histidine. In Bacillus cereus (strain ATCC 14579 / DSM 31 / CCUG 7414 / JCM 2152 / NBRC 15305 / NCIMB 9373 / NCTC 2599 / NRRL B-3711), this protein is Histidinol dehydrogenase.